A 250-amino-acid chain; its full sequence is Proteasome subunit alpha type-4-2 (250 aa).

The 26S proteasome consists of a 20S proteasome core and two 19S regulatory subunits. The 20S proteasome core is composed of 28 subunits that are arranged in four stacked rings, resulting in a barrel-shaped structure. The two end rings are each formed by seven alpha subunits, and the two central rings are each formed by seven beta subunits. The catalytic chamber with the active sites is on the inside of the barrel.

It is found in the cytoplasm. Its subcellular location is the nucleus. The proteasome is a multicatalytic proteinase complex which is characterized by its ability to cleave peptides with Arg, Phe, Tyr, Leu, and Glu adjacent to the leaving group at neutral or slightly basic pH. The proteasome has an ATP-dependent proteolytic activity. This chain is Proteasome subunit alpha type-4-2, found in Oryza sativa subsp. indica (Rice).